A 687-amino-acid chain; its full sequence is MPRSTSDRFRWSPLSLAIACTLSLAVQAADTSSTQTNSKKRIADTMVVTATGNERSSFEAPMMVTVVEADTPTSETATSATDMLRNIPGLTVTGSGRVNGQDVTLRGYGKQGVLTLVDGIRQGTDTGHLNSTFLDPALVKRVEIVRGPSALLYGSGALGGVISYETVDAADLLLPGQNSGYRVYSAAATGDHSFGLGASAFGRTDDVDGILSFGTRDIGNIRQSDGFNAPNDETISNVLAKGTWRIDQIQSLSANLRYYNNSALEPKNPQTSAASSTNLMTDRSTIQRDAQLKYNIKPLDQEWLNATAQVYYSEVEINARPQGTPEEGRKQTTKGGKLENRTRLFTDSFASHLLTYGTEAYKQEQTPSGATESFPQADIRFGSGWLQDEITLRDLPVSILAGTRYDNYRGSSEGYADVDADKWSSRGAVSVTPTDWLMLFGSYAQAFRAPTMGEMYNDSKHFSMNIMGNTLTNYWVPNPNLKPETNETQEYGFGLRFNDLMMAEDDLQFKASYFDTNAKDYISTGVTMDFGFGPGGLYCKNCSTYSTNIDRAKIWGWDATMTYQTQWFNLGLAYNRTRGKNQNTNEWLDTINPDTVTSTLDVPVANSGFAVGWIGTFADRSSRVSSSGTPQAGYGVNDFYVSYKGQEQFKGMTTTVVLGNAFDKGYYGPQGVPQDGRNAKFFVSYQW.

A signal peptide spans 1–28 (MPRSTSDRFRWSPLSLAIACTLSLAVQA). A TonB box motif is present at residues 44–51 (DTMVVTAT). Positions 56–167 (SSFEAPMMVT…LGGVISYETV (112 aa)) constitute a TBDR plug domain. Positions 178-687 (NSGYRVYSAA…NAKFFVSYQW (510 aa)) constitute a TBDR beta-barrel domain. Residues 319-338 (ARPQGTPEEGRKQTTKGGKL) are disordered. Basic and acidic residues predominate over residues 326 to 338 (EEGRKQTTKGGKL). The TonB C-terminal box signature appears at 670–687 (QGVPQDGRNAKFFVSYQW).

Belongs to the TonB-dependent receptor family.

It is found in the cell outer membrane. Functionally, this protein is involved in the initial step of iron uptake by binding hemin, an iron chelatin siderophore that allows the bacteria to extract iron from the environment. This is Hemin receptor (hemR) from Yersinia enterocolitica.